The sequence spans 359 residues: Trans-enoyl reductase RAP1 (359 aa).

Residue 49–52 participates in NADP(+) binding; sequence CDFK. Residue 137–144 coordinates substrate; it reads TCIATACM. NADP(+)-binding positions include 195–198, Tyr213, and 260–261; these read SPKN and LE. Residue 281–285 coordinates substrate; it reads GQMIL. 350–351 provides a ligand contact to NADP(+); the sequence is VA.

It belongs to the zinc-containing alcohol dehydrogenase family. Monomer.

The protein operates within secondary metabolite biosynthesis. Functionally, trans-enoyl reductase; part of the gene cluster that mediates the biosynthesis of a tyrosine-derived cytochalasan acting as a fungal signal recognized by resistant rice plants and leads to avirulence in Pi33 resistant rice cultivars. The first step in the pathway is catalyzed by the hybrid PKS-NRPS ACE1, assisted by the enoyl reductase RAP1, that are responsible for fusion of the tyrosine precursor and the polyketide backbone. The polyketide synthase module (PKS) of ACE1 is responsible for the synthesis of the polyketide backbone and the downstream nonribosomal peptide synthetase (NRPS) amidates the carboxyl end of the polyketide with the tyrosine precursor. Because ACE1 lacks a designated enoylreductase (ER) domain, the required activity is provided the enoyl reductase RAP1. Reduction by the hydrolyase ORFZ, followed by dehydration and intra-molecular Diels-Alder cyclization by the Diels-Alderase ORF3 then yield the required isoindolone-fused macrocycle. A number of oxidative steps catalyzed by the tailoring enzymes identified within the cluster, including cytochrome P450 monooxygenases CYP1 to CYP4, the FAD-linked oxidoreductase OXR2 and the short-chain dehydrogenase/reductase OXR1, are further required to afford the final cytochalasans that confer avirulence and which have still to be identified. The monooxygenase CYP1 has been shown to be a site-selective C-18 hydroxylase whereas the function of CYP3 is the site-selective epoxidation of the C-6/C-7 olefin that is present in some intermediate compounds. Finally, SYN2 and RAP2 are not required for avirulence in Pi33 resistant rice cultivars. This Pyricularia oryzae (strain 70-15 / ATCC MYA-4617 / FGSC 8958) (Rice blast fungus) protein is Trans-enoyl reductase RAP1.